A 262-amino-acid chain; its full sequence is 2-aminoethylphosphonate dioxygenase (262 aa).

Lys-108 is a binding site for 2-oxoglutarate. Residues His-118, Asp-120, and His-198 each contribute to the Fe cation site.

The protein belongs to the PhyH family. It depends on Fe(2+) as a cofactor.

It catalyses the reaction (2-aminoethyl)phosphonate + 2-oxoglutarate + O2 = (1R)-(2-amino-1-hydroxyethyl)phosphonate + succinate + CO2. With respect to regulation, activity is enhanced by ascorbate. Its function is as follows. Involved in the degradation of the organophosphonate 2-aminoethylphosphonic acid (2-AEP). Catalyzes the hydroxylation of 2-aminoethylphosphonic acid to yield (2-amino-1-hydroxyethyl)phosphonic acid. The protein is 2-aminoethylphosphonate dioxygenase of Uncultured bacterium HF130_AEPn_1.